A 338-amino-acid chain; its full sequence is Ketol-acid reductoisomerase (NADP(+)) (338 aa).

One can recognise a KARI N-terminal Rossmann domain in the interval 1–181; the sequence is MTVYYDKDCN…GGGRTAIIET (181 aa). Residues 24 to 27, Arg-47, Ser-52, and 82 to 85 each bind NADP(+); these read FGSQ and DENQ. His-107 is an active-site residue. Position 133 (Gly-133) interacts with NADP(+). The 146-residue stretch at 182-327 folds into the KARI C-terminal knotted domain; it reads TFKDETETDL…VKLRTMMPWI (146 aa). Mg(2+) contacts are provided by Asp-190, Glu-194, Glu-226, and Glu-230. Ser-251 is a substrate binding site.

The protein belongs to the ketol-acid reductoisomerase family. Requires Mg(2+) as cofactor.

It carries out the reaction (2R)-2,3-dihydroxy-3-methylbutanoate + NADP(+) = (2S)-2-acetolactate + NADPH + H(+). The catalysed reaction is (2R,3R)-2,3-dihydroxy-3-methylpentanoate + NADP(+) = (S)-2-ethyl-2-hydroxy-3-oxobutanoate + NADPH + H(+). It participates in amino-acid biosynthesis; L-isoleucine biosynthesis; L-isoleucine from 2-oxobutanoate: step 2/4. The protein operates within amino-acid biosynthesis; L-valine biosynthesis; L-valine from pyruvate: step 2/4. Involved in the biosynthesis of branched-chain amino acids (BCAA). Catalyzes an alkyl-migration followed by a ketol-acid reduction of (S)-2-acetolactate (S2AL) to yield (R)-2,3-dihydroxy-isovalerate. In the isomerase reaction, S2AL is rearranged via a Mg-dependent methyl migration to produce 3-hydroxy-3-methyl-2-ketobutyrate (HMKB). In the reductase reaction, this 2-ketoacid undergoes a metal-dependent reduction by NADPH to yield (R)-2,3-dihydroxy-isovalerate. This Sulfurimonas denitrificans (strain ATCC 33889 / DSM 1251) (Thiomicrospira denitrificans (strain ATCC 33889 / DSM 1251)) protein is Ketol-acid reductoisomerase (NADP(+)).